Consider the following 351-residue polypeptide: Flagellin (351 aa).

It belongs to the bacterial flagellin family.

It localises to the secreted. The protein resides in the bacterial flagellum. Its function is as follows. Flagellin is the subunit protein which polymerizes to form the filaments of bacterial flagella. In Serratia marcescens, this protein is Flagellin (fliC).